Here is a 372-residue protein sequence, read N- to C-terminus: N-methyl-L-tryptophan oxidase (372 aa).

Residue 4–34 coordinates FAD; sequence DLIIIGSGSVGAAAGYYATRAGLKVLMTDAH. Position 307 is an S-8alpha-FAD cysteine (Cys307).

This sequence belongs to the MSOX/MTOX family. MTOX subfamily. In terms of assembly, monomer. It depends on FAD as a cofactor.

The catalysed reaction is N(alpha)-methyl-L-tryptophan + O2 + H2O = L-tryptophan + formaldehyde + H2O2. Catalyzes the oxidative demethylation of N-methyl-L-tryptophan. The sequence is that of N-methyl-L-tryptophan oxidase from Salmonella typhi.